Here is a 328-residue protein sequence, read N- to C-terminus: Cytochrome c biogenesis protein CcsA (328 aa).

Helical transmembrane passes span 13 to 33 (ISFSVVSIVLTIYFLTFLVNL), 46 to 66 (GIVITFFGITGLLFTRWIYSG), 73 to 93 (LYESLIFLSWAFSIIHMISYF), 101 to 121 (LNAITAPSAIFIQGFATSGLL), 146 to 166 (MILGYGALLCGSLLSIALLVI), 234 to 254 (IISLGFIFLTVGILSGAVWAN), 263 to 283 (WDPKETWAFITWTIFAIFLHI), and 295 to 315 (AIVASTGFLLIWICYFGVNLL).

Belongs to the CcmF/CycK/Ccl1/NrfE/CcsA family. May interact with Ccs1.

The protein localises to the plastid. The protein resides in the chloroplast thylakoid membrane. Functionally, required during biogenesis of c-type cytochromes (cytochrome c6 and cytochrome f) at the step of heme attachment. The sequence is that of Cytochrome c biogenesis protein CcsA from Arabis hirsuta (Hairy rock-cress).